Here is a 211-residue protein sequence, read N- to C-terminus: MFSYYFQGLALGAAMILPLGPQNAFVMNQGIRRQYHIMIALLCAISDLVLICAGIFGGSALLMQSPWLLALVTWGGVAFLLWYGFGAFKTAMSSNIELASAEVMKQGRWKIIATMLAVTWLNPHVYLDTFVVLGSLGGQLDVEPKRWFALGTISASFLWFFGLALLAAWLAPRLRTAKAQRIINLVVGCVMWFIALQLARDGIAHAQALFS.

Residues 1–38 (MFSYYFQGLALGAAMILPLGPQNAFVMNQGIRRQYHIM) are Cytoplasmic-facing. Residues 39 to 58 (IALLCAISDLVLICAGIFGG) form a helical membrane-spanning segment. The Periplasmic segment spans residues 59-63 (SALLM). Residues 64-91 (QSPWLLALVTWGGVAFLLWYGFGAFKTA) traverse the membrane as a helical segment. Topologically, residues 92-102 (MSSNIELASAE) are cytoplasmic. The chain crosses the membrane as a helical span at residues 103-130 (VMKQGRWKIIATMLAVTWLNPHVYLDTF). Topologically, residues 131–140 (VVLGSLGGQL) are periplasmic. A helical transmembrane segment spans residues 141-170 (DVEPKRWFALGTISASFLWFFGLALLAAWL). Topologically, residues 171–173 (APR) are cytoplasmic. Residues 174–200 (LRTAKAQRIINLVVGCVMWFIALQLAR) traverse the membrane as a helical segment. Over 201-211 (DGIAHAQALFS) the chain is Periplasmic.

It belongs to the LysE/ArgO transporter (TC 2.A.75) family. As to quaternary structure, monomer.

The protein localises to the cell inner membrane. The catalysed reaction is L-arginine(in) = L-arginine(out). Functionally, involved in the export of arginine. Important to control the intracellular level of arginine and the correct balance between arginine and lysine. May also be involved in the export of canavanine (a plant-derived antimetabolite). In Escherichia coli (strain K12), this protein is Arginine exporter protein ArgO.